Here is a 181-residue protein sequence, read N- to C-terminus: ATP synthase subunit delta (181 aa).

It belongs to the ATPase delta chain family. As to quaternary structure, F-type ATPases have 2 components, F(1) - the catalytic core - and F(0) - the membrane proton channel. F(1) has five subunits: alpha(3), beta(3), gamma(1), delta(1), epsilon(1). F(0) has three main subunits: a(1), b(2) and c(10-14). The alpha and beta chains form an alternating ring which encloses part of the gamma chain. F(1) is attached to F(0) by a central stalk formed by the gamma and epsilon chains, while a peripheral stalk is formed by the delta and b chains.

The protein resides in the cell membrane. Functionally, f(1)F(0) ATP synthase produces ATP from ADP in the presence of a proton or sodium gradient. F-type ATPases consist of two structural domains, F(1) containing the extramembraneous catalytic core and F(0) containing the membrane proton channel, linked together by a central stalk and a peripheral stalk. During catalysis, ATP synthesis in the catalytic domain of F(1) is coupled via a rotary mechanism of the central stalk subunits to proton translocation. This protein is part of the stalk that links CF(0) to CF(1). It either transmits conformational changes from CF(0) to CF(1) or is implicated in proton conduction. This is ATP synthase subunit delta from Clostridioides difficile (strain 630) (Peptoclostridium difficile).